The primary structure comprises 357 residues: Protein phosphatase 1 regulatory subunit 42 (357 aa).

7 LRR repeats span residues 29–50, 51–72, 73–94, 95–116, 117–138, 147–168, and 169–190; these read KITH…SLCK, NLSV…NYAT, NLTH…RSLK, KLEK…EGLG, ELRE…LFDP, SLSI…EILE, and NLNQ…EFLL. The LRRCT domain occupies 204–242; sequence NPVCLKPKYRDRLILVSKSLEFLDGKEIKNIERQFLMNW.

In terms of assembly, interacts with PPP1CC isoform gamma-2; the interaction is direct. Interacts with actin, dynein, KIF5B, KIFC1 and tubulin. Associates with microtubules. In terms of processing, phosphorylated; in the testis.

It is found in the cytoplasm. The protein resides in the cytoskeleton. It localises to the microtubule organizing center. The protein localises to the centrosome. Functionally, regulates phosphatase activity of protein phosphatase 1 (PP1) complexes in the testis. The protein is Protein phosphatase 1 regulatory subunit 42 (PPP1R42) of Macaca fascicularis (Crab-eating macaque).